Consider the following 399-residue polypeptide: Succinate--CoA ligase [ADP-forming] subunit beta (399 aa).

An ATP-grasp domain is found at 9-254 (KAVLAEFGAP…ESEEDPKEIE (246 aa)). Residues lysine 46, 53 to 55 (GRG), glutamate 109, alanine 112, and glutamate 117 each bind ATP. Asparagine 209 and aspartate 223 together coordinate Mg(2+). Substrate is bound by residues asparagine 274 and 331–333 (GIM).

This sequence belongs to the succinate/malate CoA ligase beta subunit family. As to quaternary structure, heterotetramer of two alpha and two beta subunits. The cofactor is Mg(2+).

The catalysed reaction is succinate + ATP + CoA = succinyl-CoA + ADP + phosphate. It catalyses the reaction GTP + succinate + CoA = succinyl-CoA + GDP + phosphate. Its pathway is carbohydrate metabolism; tricarboxylic acid cycle; succinate from succinyl-CoA (ligase route): step 1/1. In terms of biological role, succinyl-CoA synthetase functions in the citric acid cycle (TCA), coupling the hydrolysis of succinyl-CoA to the synthesis of either ATP or GTP and thus represents the only step of substrate-level phosphorylation in the TCA. The beta subunit provides nucleotide specificity of the enzyme and binds the substrate succinate, while the binding sites for coenzyme A and phosphate are found in the alpha subunit. This chain is Succinate--CoA ligase [ADP-forming] subunit beta, found in Caulobacter vibrioides (strain NA1000 / CB15N) (Caulobacter crescentus).